The following is a 787-amino-acid chain: Integrin beta-6 (787 aa).

Residues 1–21 (MGIELVCLFLLLLGRNDHVQG) form the signal peptide. The PSI domain maps to 22 to 71 (GCAWGGAESCSDCLLTGPHCAWCSQENFTHLSGAGERCDTPANLLAKGCQ). The Extracellular segment spans residues 22–708 (GCAWGGAESC…KDCPKPPNIP (687 aa)). 19 disulfide bridges follow: Cys-23–Cys-41, Cys-31–Cys-454, Cys-34–Cys-59, Cys-44–Cys-70, Cys-197–Cys-204, Cys-252–Cys-293, Cys-394–Cys-406, Cys-426–Cys-452, Cys-456–Cys-476, Cys-467–Cys-479, Cys-481–Cys-490, Cys-492–Cys-519, Cys-502–Cys-517, Cys-511–Cys-522, Cys-524–Cys-537, Cys-539–Cys-560, Cys-544–Cys-558, Cys-552–Cys-563, and Cys-565–Cys-574. N-linked (GlcNAc...) asparagine glycosylation is found at Asn-48 and Asn-97. The 241-residue stretch at 131–371 (YPVDLYYLMD…QLIISAYEEL (241 aa)) folds into the VWFA domain. The Mg(2+) site is built by Asp-140, Ser-142, and Ser-144. Ca(2+) contacts are provided by Ser-144, Asp-147, Asp-148, and Glu-179. Residues Asn-235, Asp-237, Pro-239, and Glu-240 each coordinate Ca(2+). Glu-240 lines the Mg(2+) pocket. The N-linked (GlcNAc...) asparagine glycan is linked to Asn-260. Ca(2+) contacts are provided by Asp-271 and Lys-355. The N-linked (GlcNAc...) asparagine glycan is linked to Asn-387. N-linked (GlcNAc...) asparagine glycosylation is present at Asn-418. I-EGF domains follow at residues 456-491 (CQRE…PHCE), 492-538 (CGED…PYCQ), 539-575 (CDNF…EYCN), and 576-615 (CTTN…PTCE). 2 N-linked (GlcNAc...) asparagine glycosylation sites follow: Asn-463 and Asn-471. The N-linked (GlcNAc...) asparagine glycan is linked to Asn-541. Asn-575 is a glycosylation site (N-linked (GlcNAc...) asparagine). Intrachain disulfides connect Cys-576/Cys-599, Cys-583/Cys-597, Cys-591/Cys-602, Cys-604/Cys-614, Cys-617/Cys-620, Cys-624/Cys-669, Cys-630/Cys-649, Cys-633/Cys-645, and Cys-677/Cys-701. Residues 709-729 (MIMLGVSLAILLIGVVLLCIW) form a helical membrane-spanning segment. The interval 730 to 757 (KLLVSFHDRKEVAKFEAERSKAKWQTGT) is interaction with HAX1. Over 730-787 (KLLVSFHDRKEVAKFEAERSKAKWQTGTNPLYRGSTSTFKNVTYKHREKHKAGLSSDG) the chain is Cytoplasmic.

This sequence belongs to the integrin beta chain family. Heterodimer of an alpha and a beta subunit. Interacts with FLNB. Interacts with HAX1. ITGAV:ITGB6 interacts with FBN1. ITGAV:ITGB6 interacts with TGFB1.

Its subcellular location is the cell membrane. It is found in the cell junction. The protein localises to the focal adhesion. In terms of biological role, integrin alpha-V:beta-6 (ITGAV:ITGB6) is a receptor for fibronectin and cytotactin. It recognizes the sequence R-G-D in its ligands. ITGAV:ITGB6 acts as a receptor for fibrillin-1 (FBN1) and mediates R-G-D-dependent cell adhesion to FBN1. Integrin alpha-V:beta-6 (ITGAV:ITGB6) mediates R-G-D-dependent release of transforming growth factor beta-1 (TGF-beta-1) from regulatory Latency-associated peptide (LAP), thereby playing a key role in TGF-beta-1 activation. The chain is Integrin beta-6 (Itgb6) from Mus musculus (Mouse).